A 159-amino-acid chain; its full sequence is Transcription elongation factor GreA (159 aa).

Residues 3-37 (TNKEVVLTYEGLQKLEQELENLKTVKRREVAERIK) adopt a coiled-coil conformation.

Belongs to the GreA/GreB family.

Necessary for efficient RNA polymerase transcription elongation past template-encoded arresting sites. The arresting sites in DNA have the property of trapping a certain fraction of elongating RNA polymerases that pass through, resulting in locked ternary complexes. Cleavage of the nascent transcript by cleavage factors such as GreA or GreB allows the resumption of elongation from the new 3'terminus. GreA releases sequences of 2 to 3 nucleotides. The protein is Transcription elongation factor GreA of Acetivibrio thermocellus (strain ATCC 27405 / DSM 1237 / JCM 9322 / NBRC 103400 / NCIMB 10682 / NRRL B-4536 / VPI 7372) (Clostridium thermocellum).